A 272-amino-acid polypeptide reads, in one-letter code: Dickkopf-related protein 1 (272 aa).

Residues Met1–Ala31 form the signal peptide. O-linked (GalNAc...) serine glycosylation is present at Ser62. Disulfide bonds link Cys86–Cys98, Cys92–Cys114, Cys117–Cys131, Cys124–Cys136, Cys130–Cys141, Cys195–Cys207, Cys201–Cys216, Cys206–Cys243, Cys226–Cys251, and Cys245–Cys269. The DKK-type Cys-1 stretch occupies residues Cys86–Cys141. A DKK-type Cys-2 region spans residues Cys195–Cys269. N-linked (GlcNAc...) asparagine glycosylation occurs at Asn262.

It belongs to the dickkopf family. As to quaternary structure, interacts (via the C-terminal Cys-rich domain) with LRP5 (via beta-propeller regions 3 and 4); the interaction, enhanced by MESD and or KREMEN, antagonizes Wnt-mediated signaling. Interacts with LRP6. Forms a ternary complex with LRP6 and KREM1. Interacts with KREM1.

It localises to the secreted. In terms of biological role, antagonizes canonical Wnt signaling by inhibiting LRP5/6 interaction with Wnt and by forming a ternary complex with the transmembrane protein KREMEN that promotes internalization of LRP5/6. Inhibits the pro-apoptotic function of KREMEN1 in a Wnt-independent manner, and has anti-apoptotic activity. Plays a role in limb development; attenuates Wnt signaling in the developing limb to allow normal limb patterning. The chain is Dickkopf-related protein 1 (Dkk1) from Mus musculus (Mouse).